Here is a 176-residue protein sequence, read N- to C-terminus: Inorganic pyrophosphatase (176 aa).

The substrate site is built by K30, R44, and Y56. Mg(2+)-binding residues include D66, D71, and D103. Position 142 (Y142) interacts with substrate.

The protein belongs to the PPase family. In terms of assembly, homohexamer. Requires Mg(2+) as cofactor.

Its subcellular location is the cytoplasm. It catalyses the reaction diphosphate + H2O = 2 phosphate + H(+). In terms of biological role, catalyzes the hydrolysis of inorganic pyrophosphate (PPi) forming two phosphate ions. This chain is Inorganic pyrophosphatase, found in Vibrio cholerae serotype O1 (strain ATCC 39315 / El Tor Inaba N16961).